The primary structure comprises 477 residues: Glycogen synthase (477 aa).

K15 contacts ADP-alpha-D-glucose.

This sequence belongs to the glycosyltransferase 1 family. Bacterial/plant glycogen synthase subfamily.

It carries out the reaction [(1-&gt;4)-alpha-D-glucosyl](n) + ADP-alpha-D-glucose = [(1-&gt;4)-alpha-D-glucosyl](n+1) + ADP + H(+). Its pathway is glycan biosynthesis; glycogen biosynthesis. Synthesizes alpha-1,4-glucan chains using ADP-glucose. This is Glycogen synthase (glgA) from Salmonella typhimurium (strain LT2 / SGSC1412 / ATCC 700720).